Reading from the N-terminus, the 674-residue chain is MGALASRQHAGVEEMDMPCNSLYRYPPKSGSYFGSHFIMGGEKFESSHPEGYLFGENSDLNFLGSRPVTFPYTAPSPQEPVKTLRSLINIRKDTLRLVRCTEELKTTGVEGSRPKVHYNVEFTFDTDARVAITMYYQATEEFQGGIPSYLPKSSNLQSDTVHFKRGVSQQFCFPSHTVDPSEWREEELTFDLDREVYPMVVHAVVEEGEEHLGHSHVLMATFEKHADGSFCVKPLKQKQVVDGVSYLLQEIYGIENKYNSQDSKVAEDELSDNSAECVVCLSDVRDTLILPCRHLCLCNACADTLRYQASNCPICRLPFRALLQIRAMRKVPGPHSPGGFSPIIAAPTSDSEEHTSEHVPPGYEVVSLLEALNGPLTPSPSAPPLRALGEARRPGGLPSYGSDIHLRMHSPLQHLCGGQALKLKKSISRSISQNSSVLQEDEMEKSFSEAEIQTPRKKTSQLAEENGVTPESENLTLSSSGAIDQSSCTGTPLSPTISSPEDPLSSSLAQSIMSMASSHSQQSQLSTDTVSSMSGSYTAGGMEEEEGGITPSPPAAASGSPSIEGELSPAESPEPHFVTVSAEEMDAEGNVTEEEFASPEEDDGQMTGRECDNNNAAGVTLRDVLDNVRGSEGCLADVCYSSIPGQQRSNPYHGSDNCISLQDDTQSHLSTKLV.

The segment at 277 to 316 adopts an RING-type zinc-finger fold; sequence CVVCLSDVRDTLILPCRHLCLCNACADTLRYQASNCPICR. 2 disordered regions span residues 376–404 and 433–610; these read LTPSPSAPPLRALGEARRPGGLPSYGSDI and QNSS…TGRE. Residues 469-508 show a composition bias toward polar residues; that stretch reads TPESENLTLSSSGAIDQSSCTGTPLSPTISSPEDPLSSSL. Residues 509 to 526 show a composition bias toward low complexity; it reads AQSIMSMASSHSQQSQLS. Residues 527-537 show a composition bias toward polar residues; it reads TDTVSSMSGSY. The span at 583 to 604 shows a compositional bias: acidic residues; the sequence is EEMDAEGNVTEEEFASPEEDDG.

The protein localises to the cytoplasm. It catalyses the reaction S-ubiquitinyl-[E2 ubiquitin-conjugating enzyme]-L-cysteine + [acceptor protein]-L-lysine = [E2 ubiquitin-conjugating enzyme]-L-cysteine + N(6)-ubiquitinyl-[acceptor protein]-L-lysine.. Functionally, E3 ubiquitin ligase that ubiquitinates apbb1 for its degradation by the proteasome and thus prevents apoptosis and promotes survival of neurons. Has a dual role in neurons as it is also required for dendrite growth and maintenance for which its ligase activity is not critical. May act as a scaffold molecule to regulate this process. Acts as a downstream effector of the interconnected PI3K and MAPK signaling pathways and thus participates in the regulation of the cell cycle. The polypeptide is E3 ubiquitin ligase Rnf157 (rnf157) (Xenopus laevis (African clawed frog)).